The sequence spans 328 residues: 4-hydroxythreonine-4-phosphate dehydrogenase (328 aa).

Substrate contacts are provided by His134 and Thr135. Residues His164, His209, and His265 each contribute to the a divalent metal cation site. Substrate-binding residues include Lys273, Asn282, and Arg291.

The protein belongs to the PdxA family. As to quaternary structure, homodimer. It depends on Zn(2+) as a cofactor. Mg(2+) is required as a cofactor. The cofactor is Co(2+).

The protein resides in the cytoplasm. It carries out the reaction 4-(phosphooxy)-L-threonine + NAD(+) = 3-amino-2-oxopropyl phosphate + CO2 + NADH. Its pathway is cofactor biosynthesis; pyridoxine 5'-phosphate biosynthesis; pyridoxine 5'-phosphate from D-erythrose 4-phosphate: step 4/5. Catalyzes the NAD(P)-dependent oxidation of 4-(phosphooxy)-L-threonine (HTP) into 2-amino-3-oxo-4-(phosphooxy)butyric acid which spontaneously decarboxylates to form 3-amino-2-oxopropyl phosphate (AHAP). This is 4-hydroxythreonine-4-phosphate dehydrogenase from Vibrio vulnificus (strain CMCP6).